Here is a 642-residue protein sequence, read N- to C-terminus: Cysteine-rich receptor-like protein kinase 27 (642 aa).

An N-terminal signal peptide occupies residues 1 to 24; sequence MASTSIMLSSFFSFFFLTFFVTYA. The Extracellular portion of the chain corresponds to 25-274; the sequence is QQNVTVHTIC…QGKSKDRSKT (250 aa). 7 N-linked (GlcNAc...) asparagine glycosylation sites follow: Asn-27, Asn-40, Asn-44, Asn-70, Asn-145, Asn-173, and Asn-258. 2 Gnk2-homologous domains span residues 29 to 130 and 136 to 240; these read TVHT…SRII and PVPF…VYPF. The helical transmembrane segment at 275-295 threads the bilayer; sequence LIFAVVPIVAIILGLVFLFIY. At 296-642 the chain is on the cytoplasmic side; the sequence is LKRRRKKKTL…DVSLTDLSAR (347 aa). Residues 333–620 enclose the Protein kinase domain; sequence FSLTNKIGEG…QLPKPSQPGF (288 aa). ATP is bound by residues 339–347 and Lys-361; that span reads IGEGGFGVV. A Phosphotyrosine modification is found at Tyr-406. Residue Asp-458 is the Proton acceptor of the active site. At Ser-462 the chain carries Phosphoserine. Thr-498 carries the post-translational modification Phosphothreonine. Tyr-506 carries the post-translational modification Phosphotyrosine.

Belongs to the protein kinase superfamily. Ser/Thr protein kinase family. CRK subfamily.

It localises to the membrane. It carries out the reaction L-seryl-[protein] + ATP = O-phospho-L-seryl-[protein] + ADP + H(+). The catalysed reaction is L-threonyl-[protein] + ATP = O-phospho-L-threonyl-[protein] + ADP + H(+). This Arabidopsis thaliana (Mouse-ear cress) protein is Cysteine-rich receptor-like protein kinase 27 (CRK27).